The sequence spans 174 residues: Peptide methionine sulfoxide reductase MsrA (174 aa).

The active site involves cysteine 10.

This sequence belongs to the MsrA Met sulfoxide reductase family.

The enzyme catalyses L-methionyl-[protein] + [thioredoxin]-disulfide + H2O = L-methionyl-(S)-S-oxide-[protein] + [thioredoxin]-dithiol. The catalysed reaction is [thioredoxin]-disulfide + L-methionine + H2O = L-methionine (S)-S-oxide + [thioredoxin]-dithiol. In terms of biological role, has an important function as a repair enzyme for proteins that have been inactivated by oxidation. Catalyzes the reversible oxidation-reduction of methionine sulfoxide in proteins to methionine. The chain is Peptide methionine sulfoxide reductase MsrA from Pseudarthrobacter chlorophenolicus (strain ATCC 700700 / DSM 12829 / CIP 107037 / JCM 12360 / KCTC 9906 / NCIMB 13794 / A6) (Arthrobacter chlorophenolicus).